A 299-amino-acid polypeptide reads, in one-letter code: Homeobox protein ceh-24 (299 aa).

The span at 1–35 (MSEKETPSPVLDVKKEKNEETGIDEEKSSEDDCSK) shows a compositional bias: basic and acidic residues. 2 disordered regions span residues 1-45 (MSEK…NPSK) and 208-263 (QEKE…SGVF). The segment at residues 150–209 (RRKRRVLFSQAQVYELERRFKQAKYLTAPEREQLANSIRLTPTQVKIWFQNHRYKCKRQE) is a DNA-binding region (homeobox). The segment covering 242-252 (DDKDDEEEEES) has biased composition (acidic residues).

Belongs to the NK-2 homeobox family. In terms of tissue distribution, expressed in the 8 vulval muscles, 8-10 ventral neurons in the head and in the most posterior pharyngeal muscle cell, m8. Expressed in SIA, SIB and SMB sublateral motor neurons, and in muscles of the pharynx and vulva.

Its subcellular location is the nucleus. Probable transcriptional regulator that is required in neural development for the normal formation of sublateral cholinergic motor neuron processes. Plays a role in regulating the expression of acetylcholine transporter protein unc-17 in the sublateral processes. In particular, it is required in sublateral motor neurons for a left-right turning behavior that occurs during the lethargus phase of the normal sleep process called 'flipping'. During 'flipping' animals rotate 180 degrees about their longitudinal axis. The chain is Homeobox protein ceh-24 from Caenorhabditis elegans.